The following is a 2350-amino-acid chain: Probable JmjC domain-containing histone demethylation protein 2C (2350 aa).

2 disordered regions span residues 96–302 and 314–336; these read TRAQ…LQEC and PKDRLVSRTPTPKCVTDIKNDTH. Residues 98–127 are compositionally biased toward polar residues; it reads AQANSPRPAMNSQAAVPKQNTHQQQQQRSI. A phosphoserine mark is found at serine 135 and serine 138. Basic and acidic residues predominate over residues 141–160; the sequence is DEEKMKEDKYDCVSRGENPK. The segment covering 161–171 has biased composition (basic residues); sequence GKNKHVVTKRR. Basic and acidic residues predominate over residues 172 to 189; it reads KPEEAEKRLSMKRLRTDN. Positions 190–200 are enriched in low complexity; it reads ASDASESSDAE. 2 positions are modified to phosphoserine: serine 191 and serine 194. The segment covering 257 to 280 has biased composition (basic and acidic residues); the sequence is QEDKNHNEGEKPKSTDSHLQDKMT. Over residues 281–302 the composition is skewed to polar residues; that stretch reads LRSSEQATVADHNSNDSVLQEC. Serine 294 and serine 320 each carry phosphoserine. Threonine 324 is modified (phosphothreonine). Phosphoserine occurs at positions 420, 436, 457, 458, 460, 471, and 762. Disordered stretches follow at residues 426–486, 747–766, 859–883, 1030–1083, and 1422–1508; these read SVTE…NSQA, SSAEPHRPHKITVHSSPPLT, RENYSRVVPSSSSPKSHAIKQDKDV, RKES…DQSL, and EKVS…VPRS. Composition is skewed to low complexity over residues 863-874 and 1034-1045; these read SRVVPSSSSPKS and SYSSLSPPTLTP. Residues 1071–1083 are compositionally biased toward polar residues; the sequence is SQSNFKNSSDQSL. A compositionally biased stretch (basic residues) spans 1454–1463; it reads KRQPKPTYKK. The segment covering 1464–1480 has biased composition (basic and acidic residues); it reads KQNDLQKRKGEVEEDSK. The C6-type zinc finger occupies 1657 to 1682; the sequence is CDACEATLFNVHWVCRKCGFVACLDC. Positions 1776-1818 are enriched in polar residues; sequence KTSVSLPESQQQNSPQKSQTNGNSSPGSASTDSRLTPPESQSP. The tract at residues 1776–1874 is disordered; the sequence is KTSVSLPESQ…PASQSNEQGS (99 aa). Position 1800 is a phosphoserine (serine 1800). Basic and acidic residues predominate over residues 1826–1849; the sequence is AEQKSREEKQENKEFTLEREIKED. A compositionally biased stretch (polar residues) spans 1855–1874; the sequence is SDSPNGSTSPPASQSNEQGS. The LXXLL motif signature appears at 1876 to 1880; that stretch reads LRDLL. The interval 1933 to 1962 is disordered; it reads PNKTSKINIKSEPNEEPKESSLPATDESNK. Lysine 1942 participates in a covalent cross-link: Glycyl lysine isopeptide (Lys-Gly) (interchain with G-Cter in SUMO2). One can recognise a JmjC domain in the interval 2084 to 2308; sequence MPTRYEDFLR…QSFHLTQELR (225 aa). Positions 2146, 2148, and 2276 each coordinate Fe cation.

This sequence belongs to the JHDM2 histone demethylase family. The cofactor is Fe(2+).

It localises to the nucleus. Functionally, probable histone demethylase that specifically demethylates 'Lys-9' of histone H3, thereby playing a central role in histone code. Demethylation of Lys residue generates formaldehyde and succinate. May be involved in hormone-dependent transcriptional activation, by participating in recruitment to androgen-receptor target genes. In Mus musculus (Mouse), this protein is Probable JmjC domain-containing histone demethylation protein 2C (Jmjd1c).